The primary structure comprises 661 residues: UvrABC system protein C (661 aa).

The GIY-YIG domain maps to 26-105 (AEPGCYLMRD…IKNHQPHFNV (80 aa)). Residues 215 to 250 (DELQNLLQEQMHKYADRTDYESAARVRDQLQGLDQL) form the UVR domain.

It belongs to the UvrC family. In terms of assembly, interacts with UvrB in an incision complex.

It is found in the cytoplasm. The UvrABC repair system catalyzes the recognition and processing of DNA lesions. UvrC both incises the 5' and 3' sides of the lesion. The N-terminal half is responsible for the 3' incision and the C-terminal half is responsible for the 5' incision. The polypeptide is UvrABC system protein C (Synechococcus sp. (strain CC9902)).